Consider the following 154-residue polypeptide: Transcriptional repressor NrdR (154 aa).

A zinc finger spans residues 3–34 (CPFCGANDTKVIDSRLVAEGEQVRRRRECVAC). The 91-residue stretch at 49 to 139 (PRLIKQDGTR…VYRRFQDLDE (91 aa)) folds into the ATP-cone domain.

Belongs to the NrdR family. Zn(2+) serves as cofactor.

Its function is as follows. Negatively regulates transcription of bacterial ribonucleotide reductase nrd genes and operons by binding to NrdR-boxes. This Pseudomonas putida (strain GB-1) protein is Transcriptional repressor NrdR.